The sequence spans 229 residues: Cytidylate kinase (229 aa).

ATP is bound at residue 15–23; it reads GPAASGKST.

The protein belongs to the cytidylate kinase family. Type 1 subfamily.

The protein resides in the cytoplasm. It catalyses the reaction CMP + ATP = CDP + ADP. The enzyme catalyses dCMP + ATP = dCDP + ADP. This is Cytidylate kinase from Herpetosiphon aurantiacus (strain ATCC 23779 / DSM 785 / 114-95).